The sequence spans 153 residues: Transthyretin (153 aa).

Positions 1–19 (MASFKSFLLLALLAIVSEA) are cleaved as a signal peptide. C34 carries the sulfocysteine modification. L-thyroxine-binding residues include K39 and E78. A glycan (N-linked (GlcNAc...) asparagine) is linked at N81. S141 is a binding site for L-thyroxine.

This sequence belongs to the transthyretin family. As to quaternary structure, homotetramer. Dimer of dimers. In the homotetramer, subunits assemble around a central channel that can accommodate two ligand molecules. Interacts with rbp4. In terms of processing, sulfonation of the reactive cysteine Cys-34 enhances the stability of the native conformation of TTR, avoiding misassembly of the protein leading to amyloid formation. Detected in plasma (at protein level). Expressed during metamorphosis in tadpole liver, but not in tadpole brain nor adult liver. Between 1.5 and 3 days of development, also expressed in the mesoderm of the kidney.

Its subcellular location is the secreted. Its function is as follows. Thyroid hormone-binding protein, with a much higher binding affinity for triiodothyronine (T3) than for thyroxine (T4). Probably transports triiodothyronine from the bloodstream to the brain. This chain is Transthyretin (ttr), found in Xenopus laevis (African clawed frog).